The chain runs to 179 residues: Dual-action ribosomal maturation protein DarP (179 aa).

It belongs to the DarP family.

The protein localises to the cytoplasm. Its function is as follows. Member of a network of 50S ribosomal subunit biogenesis factors which assembles along the 30S-50S interface, preventing incorrect 23S rRNA structures from forming. Promotes peptidyl transferase center (PTC) maturation. The polypeptide is Dual-action ribosomal maturation protein DarP (Photorhabdus laumondii subsp. laumondii (strain DSM 15139 / CIP 105565 / TT01) (Photorhabdus luminescens subsp. laumondii)).